A 273-amino-acid polypeptide reads, in one-letter code: Cbp/p300-interacting transactivator 2 (273 aa).

The segment at 137–204 (DLHPAAGHQM…GSGGSGSSNM (68 aa)) is disordered. Over residues 165–200 (STPGGSGGSSTPGGSGGSAGGGAGSSNSGGGSGGSG) the composition is skewed to gly residues.

This sequence belongs to the CITED family. In terms of assembly, interacts (via C-terminus) with SMAD2. Interacts (via C-terminus) with SMAD3 (via MH2 domain). Interacts with LHX2 (via LIM domains). Interacts with WT1. Interacts (via C-terminus) with EP300 (via CH1 domain); the interaction is stimulated in response to hypoxia. Interacts with PPARA. Interacts (via C-terminus) with TFAP2A, TFAP2B and TFAP2C.

Its subcellular location is the nucleus. Functionally, transcriptional coactivator of the p300/CBP-mediated transcription complex. Acts as a bridge, linking TFAP2 transcription factors and the p300/CBP transcriptional coactivator complex in order to stimulate TFAP2-mediated transcriptional activation. Positively regulates TGF-beta signaling through its association with the SMAD/p300/CBP-mediated transcriptional coactivator complex. Stimulates the peroxisome proliferator-activated receptors PPARA transcriptional activity. Enhances estrogen-dependent transactivation mediated by estrogen receptors. Also acts as a transcriptional corepressor; interferes with the binding of the transcription factors HIF1A or STAT2 and the p300/CBP transcriptional coactivator complex. Participates in sex determination and early gonad development by stimulating transcription activation of SRY. Plays a role in controlling left-right patterning during embryogenesis; potentiates transcriptional activation of NODAL-mediated gene transcription in the left lateral plate mesoderm (LPM). Plays an essential role in differentiation of the adrenal cortex from the adrenogonadal primordium (AGP); stimulates WT1-mediated transcription activation thereby up-regulating the nuclear hormone receptor NR5A1 promoter activity. Associates with chromatin to the PITX2 P1 promoter region. The protein is Cbp/p300-interacting transactivator 2 (CITED2) of Saguinus labiatus (Red-chested mustached tamarin).